The sequence spans 552 residues: MAYPERDLIVDPRSGFCKSNSTFYSKRNPLCLPPNPSLDVTTFISSQPQRGTTAFIDASTGHRLTFSDLWRVVDRVADCLYHEVGIRRGDVVLILSPNSIYIPVVCLSVMSLGAVVTTANTLNTSGEISKQIAQSNPTLVFTTSQLAPKLAAAISVVLTDEEDEKRVELTSGVRVVGILSEMMKKETSGQRVRDRVNQDDTAMMLYSSGTTGTSKGVISSHRNLTAYVAKYIDDKWKRDEIFVCTVPMFHSFGLLAFAMGSVASGSTVVILRRFGLDDMMQAVEKYKATILSLAPPVLVAMINGADQLKAKYDLTSLRKVRCGGAPLSKEVMDSFLEKYPTVNIFQGYALTESHGSGASTESVEESLKYGAVGLLSSGIEARIVDPDTGRVMGVNQPGELWLKGPSISKGYFGNEEATNETINLEGWLKLGDLCYIDEDGFLFVVDRLKELIKYKGYQVPPAELEALLIAHPHILDAAVIPFPDREAGQYPMAYVARKPESNLSEKEVIDFISNQVAPYKKIRKVAFISSIPKTASGKTLRKDLIKLSTSKL.

ATP contacts are provided by serine 207, serine 208, glycine 209, threonine 210, threonine 211, and lysine 215. Phenylalanine 252 lines the (E)-4-coumaroyl-AMP pocket. Residue arginine 273 participates in CoA binding. The interval 275–346 (GLDDMMQAVE…EKYPTVNIFQ (72 aa)) is SBD1. The (E)-4-coumaroyl-AMP site is built by glycine 324, glutamine 346, glycine 347, and threonine 351. Residues glutamine 346, glycine 347, threonine 351, aspartate 432, and arginine 447 each coordinate ATP. The SBD2 stretch occupies residues 347–411 (GYALTESHGS…LKGPSISKGY (65 aa)). The (E)-4-coumaroyl-AMP site is built by lysine 449 and lysine 453. The CoA site is built by lysine 455 and glycine 456. ATP is bound at residue lysine 538. Residues 550–552 (SKL) carry the Microbody targeting signal motif.

The protein belongs to the ATP-dependent AMP-binding enzyme family. The cofactor is Mg(2+).

It is found in the peroxisome. The catalysed reaction is (E)-4-coumarate + ATP + CoA = (E)-4-coumaroyl-CoA + AMP + diphosphate. It carries out the reaction (E)-4-coumarate + ATP + H(+) = (E)-4-coumaroyl-AMP + diphosphate. It catalyses the reaction (E)-4-coumaroyl-AMP + CoA = (E)-4-coumaroyl-CoA + AMP + H(+). Functionally, carboxylate--CoA ligase that may use 4-coumarate as substrate. Follows a two-step reaction mechanism, wherein the carboxylate substrate first undergoes adenylation by ATP, followed by a thioesterification in the presence of CoA to yield the final CoA thioester. This chain is 4-coumarate--CoA ligase-like 3, found in Arabidopsis thaliana (Mouse-ear cress).